The sequence spans 478 residues: ATP synthase subunit beta (478 aa).

ATP is bound at residue 151 to 158 (GGAGVGKT).

It belongs to the ATPase alpha/beta chains family. F-type ATPases have 2 components, CF(1) - the catalytic core - and CF(0) - the membrane proton channel. CF(1) has five subunits: alpha(3), beta(3), gamma(1), delta(1), epsilon(1). CF(0) has three main subunits: a(1), b(2) and c(9-12). The alpha and beta chains form an alternating ring which encloses part of the gamma chain. CF(1) is attached to CF(0) by a central stalk formed by the gamma and epsilon chains, while a peripheral stalk is formed by the delta and b chains.

It localises to the cell inner membrane. The enzyme catalyses ATP + H2O + 4 H(+)(in) = ADP + phosphate + 5 H(+)(out). Functionally, produces ATP from ADP in the presence of a proton gradient across the membrane. The catalytic sites are hosted primarily by the beta subunits. The sequence is that of ATP synthase subunit beta from Azorhizobium caulinodans (strain ATCC 43989 / DSM 5975 / JCM 20966 / LMG 6465 / NBRC 14845 / NCIMB 13405 / ORS 571).